A 100-amino-acid polypeptide reads, in one-letter code: Small ribosomal subunit protein uS14c (100 aa).

The protein belongs to the universal ribosomal protein uS14 family. As to quaternary structure, part of the 30S ribosomal subunit.

The protein localises to the plastid. It localises to the chloroplast. Binds 16S rRNA, required for the assembly of 30S particles. The sequence is that of Small ribosomal subunit protein uS14c from Barbarea verna (Land cress).